The chain runs to 464 residues: Alpha-amylase (464 aa).

Residues 1–21 form the signal peptide; it reads MKNTAGILAIAGMLIAPLAHA. H107 and R213 together coordinate substrate. D215 serves as the catalytic Nucleophile. Residue 218-219 coordinates substrate; sequence KH. The active-site Proton donor is E242. Substrate contacts are provided by G247 and H313.

Belongs to the glycosyl hydrolase 13 family.

Its subcellular location is the secreted. It carries out the reaction Endohydrolysis of (1-&gt;4)-alpha-D-glucosidic linkages in polysaccharides containing three or more (1-&gt;4)-alpha-linked D-glucose units.. This is Alpha-amylase from Aeromonas hydrophila.